The sequence spans 525 residues: uncharacterized protein (525 aa).

The next 2 membrane-spanning stretches (helical) occupy residues 28-48 (FIDVHVANISVAAFLTPNLII) and 353-373 (GVNALLAAIGAEIGANILFTP). Positions 146–394 (DIKIGKLKVG…ELKIASKMMF (249 aa)) constitute a Pterin-binding domain.

Its subcellular location is the cell membrane. In terms of biological role, unknown. Does not possess dihydropteroate synthase (DHPS) activity since it does not catalyze the condensation of 6-hydroxymethyl-7,8-dihydropterin pyrophosphate (DHPP) and 4-aminobenzoate to form 7,8-dihydropteroate. This is an uncharacterized protein from Methanocaldococcus jannaschii (strain ATCC 43067 / DSM 2661 / JAL-1 / JCM 10045 / NBRC 100440) (Methanococcus jannaschii).